We begin with the raw amino-acid sequence, 323 residues long: Palmitoyltransferase ZDHHC20-B (323 aa).

The Cytoplasmic segment spans residues 1 to 14; the sequence is MAPTHVLRCCQRGL. The chain crosses the membrane as a helical span at residues 15-35; the sequence is AWIPVIFIALVVCWSYYAYVV. At 36 to 41 the chain is on the lumenal side; sequence ELCLLV. Residues 42 to 62 traverse the membrane as a helical segment; sequence YLVVFHLSFVMFVWSYWKTIF. The Cytoplasmic segment spans residues 63-157; the sequence is TKPANPSKEF…NNCVGFSNYK (95 aa). The region spanning 114-164 is the DHHC domain; it reads RYCDRCQVIKPDRCHHCSACDMCVLKMDHHCPWVNNCVGFSNYKFFILFLT. Residue Cys-144 is the S-palmitoyl cysteine intermediate of the active site. Residues 158-178 traverse the membrane as a helical segment; that stretch reads FFILFLTYSLVYCLFIAASVL. At 179–195 the chain is on the lumenal side; it reads QYFIKFWTSDLPESHAK. Residues 196–219 traverse the membrane as a helical segment; sequence FHVLFLFFVAAMFCISILSLFTYH. Residues 220–323 are Cytoplasmic-facing; that stretch reads LWLVGKNRST…KQAKKKKTDE (104 aa).

This sequence belongs to the DHHC palmitoyltransferase family.

It is found in the golgi apparatus membrane. Its subcellular location is the cell membrane. The protein resides in the cytoplasm. The protein localises to the perinuclear region. It localises to the endoplasmic reticulum membrane. It is found in the endoplasmic reticulum-Golgi intermediate compartment membrane. It carries out the reaction L-cysteinyl-[protein] + hexadecanoyl-CoA = S-hexadecanoyl-L-cysteinyl-[protein] + CoA. It catalyses the reaction L-cysteinyl-[protein] + tetradecanoyl-CoA = S-tetradecanoyl-L-cysteinyl-[protein] + CoA. The catalysed reaction is L-cysteinyl-[protein] + octadecanoyl-CoA = S-octadecanoyl-L-cysteinyl-[protein] + CoA. Functionally, palmitoyltransferase that could catalyze the addition of palmitate onto various protein substrates. Catalyzes palmitoylation of Cys residues on protein substrates and has a preference for acyl-CoA with C16 fatty acid chains but may also utilize acyl-CoA with C14 and C18 fatty acid chains. This Danio rerio (Zebrafish) protein is Palmitoyltransferase ZDHHC20-B (zdhhc20b).